The sequence spans 252 residues: Small ribosomal subunit protein uS3 (252 aa).

A KH type-2 domain is found at 39–111 (IRKLINNFAK…DVNLNVLEVK (73 aa)). A disordered region spans residues 226–252 (SQSSNNPNRRPRNFKGGNNNHVNAKKN).

This sequence belongs to the universal ribosomal protein uS3 family. Part of the 30S ribosomal subunit. Forms a tight complex with proteins S10 and S14.

Functionally, binds the lower part of the 30S subunit head. Binds mRNA in the 70S ribosome, positioning it for translation. The chain is Small ribosomal subunit protein uS3 from Aster yellows witches'-broom phytoplasma (strain AYWB).